A 220-amino-acid chain; its full sequence is Meiotic nuclear division protein 1 homolog (220 aa).

Residues 76 to 147 adopt a coiled-coil conformation; it reads SKALHARKRR…KVEIEKYQEC (72 aa).

It belongs to the MND1 family.

It localises to the nucleus. Functionally, required for proper homologous chromosome pairing and efficient cross-over and intragenic recombination during meiosis. Stimulates both DMC1- and RAD51-mediated homologous strand assimilation, which is required for the resolution of meiotic double-strand breaks. This is Meiotic nuclear division protein 1 homolog from Danio rerio (Zebrafish).